The sequence spans 299 residues: Delta-9 desaturase-like 1 protein (299 aa).

Helical transmembrane passes span 31–51 (IDIA…LAPF) and 55–75 (WEAL…ITFS). The short motif at 77-82 (HRNLTH) is the Histidine box-1 element. The Histidine box-2 signature appears at 114–118 (HRFHH). The next 2 membrane-spanning stretches (helical) occupy residues 174–194 (IGLH…LPYL) and 198–218 (VGVG…ACHI). Residues 246 to 250 (HNNHH) carry the Histidine box-3 motif. Residues 262-282 (WYQVDLTWYLICFFQALGLAT) form a helical membrane-spanning segment.

The protein belongs to the fatty acid desaturase type 1 family. Requires Fe cation as cofactor.

It localises to the endoplasmic reticulum membrane. It participates in lipid metabolism; polyunsaturated fatty acid biosynthesis. The polypeptide is Delta-9 desaturase-like 1 protein (Arabidopsis thaliana (Mouse-ear cress)).